The primary structure comprises 378 residues: Chitinase (378 aa).

An N-terminal signal peptide occupies residues 1–28 (MNFTVKYSFLVICLLCCLLSTYVSVIEG). The GH18 domain occupies 53-378 (GIIQGYYPSW…AIEYFVESLH (326 aa)). Glu-174 functions as the Proton donor in the catalytic mechanism. A disulfide bond links Cys-220 and Cys-230.

Belongs to the glycosyl hydrolase 18 family. As to quaternary structure, forms a hetero-multimeric, high molecular weight complex composed of at least CHT1, SOAP AND WARP. Within the complex, may interact with WARP via a disulfide bond.

The protein localises to the secreted. Its subcellular location is the cytoplasmic vesicle. It localises to the secretory vesicle. It is found in the microneme. The catalysed reaction is Random endo-hydrolysis of N-acetyl-beta-D-glucosaminide (1-&gt;4)-beta-linkages in chitin and chitodextrins.. With respect to regulation, inhibited by allosamidin. Functionally, endochitinase that cleaves beta-1,4-linkages between tri- and tetramers of N-acetylglucosamine (GlcNAc) from penta- and hexameric chitin oligomers. Does not cleave smaller chitin oligosaccharides. Required to cross the acellular, chitin-containing peritrophic matrix (PM) which is formed around the ingested blood meal in the mosquito midgut allowing the ookinete to invade the mosquito gut epithelium. The chain is Chitinase from Plasmodium falciparum (isolate 3D7).